Reading from the N-terminus, the 131-residue chain is Insulin-like 3 (131 aa).

The first 26 residues, 1-26, serve as a signal peptide directing secretion; the sequence is MDPHPLTWALVLLGPALALSRAPAPA. 3 disulfides stabilise this stretch: cysteine 34–cysteine 116, cysteine 46–cysteine 129, and cysteine 115–cysteine 120. Positions 58–103 are cleaved as a propeptide — c peptide like; that stretch reads AVAGGDRELLQWLEGQHLFHGLMASGDPMLVLAPQPPPQASGHHHH.

It belongs to the insulin family. In terms of assembly, heterodimer of a B chain and an A chain linked by two disulfide bonds. As to expression, expressed exclusively in prenatal and postnatal Leydig cells.

It is found in the secreted. Its function is as follows. Seems to play a role in testicular function. May be a trophic hormone with a role in testicular descent in fetal life. Is a ligand for LGR8 receptor. In Sus scrofa (Pig), this protein is Insulin-like 3 (INSL3).